We begin with the raw amino-acid sequence, 473 residues long: Photosystem II CP43 reaction center protein (473 aa).

The propeptide occupies 1 to 14; the sequence is MKTLYSLRRFSHVE. Position 15 is an N-acetylthreonine (Thr15). The residue at position 15 (Thr15) is a Phosphothreonine. A run of 5 helical transmembrane segments spans residues 69-93, 134-155, 178-200, 255-275, and 291-312; these read LFEVAHFGPEKPMYEQGLILLPHLA, LLGPEIIEESFPLFRYVWKDRN, KALYFGGVYDTWAPGGGDVRKIT, KPFAWARRALVWSGEAYLSYS, and WFNNTAYPSEFYGPTGPEASQA. Glu367 is a [CaMn4O5] cluster binding site. A helical transmembrane segment spans residues 447 to 471; that stretch reads RARAAAAGFEKGIDRDFEPVLSMTP.

Belongs to the PsbB/PsbC family. PsbC subfamily. In terms of assembly, PSII is composed of 1 copy each of membrane proteins PsbA, PsbB, PsbC, PsbD, PsbE, PsbF, PsbH, PsbI, PsbJ, PsbK, PsbL, PsbM, PsbT, PsbX, PsbY, PsbZ, Psb30/Ycf12, at least 3 peripheral proteins of the oxygen-evolving complex and a large number of cofactors. It forms dimeric complexes. The cofactor is Binds multiple chlorophylls and provides some of the ligands for the Ca-4Mn-5O cluster of the oxygen-evolving complex. It may also provide a ligand for a Cl- that is required for oxygen evolution. PSII binds additional chlorophylls, carotenoids and specific lipids..

It is found in the plastid membrane. Functionally, one of the components of the core complex of photosystem II (PSII). It binds chlorophyll and helps catalyze the primary light-induced photochemical processes of PSII. PSII is a light-driven water:plastoquinone oxidoreductase, using light energy to abstract electrons from H(2)O, generating O(2) and a proton gradient subsequently used for ATP formation. The protein is Photosystem II CP43 reaction center protein of Cuscuta gronovii (Common dodder).